A 235-amino-acid polypeptide reads, in one-letter code: Isoprenyl transferase (235 aa).

The active site involves Asp-21. Asp-21 is a binding site for Mg(2+). Substrate-binding positions include 22–25, Trp-26, Lys-34, His-38, and 66–68; these read GNAR and SSE. Asn-69 (proton acceptor) is an active-site residue. Residues Trp-70, Arg-72, Arg-183, and 189-191 each bind substrate; that span reads RIS. A Mg(2+)-binding site is contributed by Glu-202.

Belongs to the UPP synthase family. In terms of assembly, homodimer. Mg(2+) is required as a cofactor.

Functionally, catalyzes the condensation of isopentenyl diphosphate (IPP) with allylic pyrophosphates generating different type of terpenoids. This chain is Isoprenyl transferase, found in Rickettsia felis (strain ATCC VR-1525 / URRWXCal2) (Rickettsia azadi).